We begin with the raw amino-acid sequence, 501 residues long: Cytokinin dehydrogenase 2 (501 aa).

A signal peptide spans 1-22; the sequence is MANLRLMITLITVLMITKSSNG. N-linked (GlcNAc...) asparagine glycans are attached at residues Asn32 and Asn51. An FAD-binding PCMH-type domain is found at 53 to 226; the sequence is TTVTPGGVIC…TRARIVLDHA (174 aa). FAD is bound by residues Ala87, Gly89, and Gly91. His92 carries the post-translational modification Pros-8alpha-FAD histidine. The FAD site is built by Ser93 and Gln97. A glycan (N-linked (GlcNAc...) asparagine) is linked at Asn107. Asp150, Thr155, Ser161, Ile165, Ile216, Tyr460, Ser495, and Gln498 together coordinate FAD.

It belongs to the oxygen-dependent FAD-linked oxidoreductase family. FAD serves as cofactor. Expressed in the shoot apex, in stipules, and occasionally in the most apical part of the inflorescence stems. Not detected in roots.

It localises to the endoplasmic reticulum. It is found in the secreted. The protein localises to the extracellular space. The catalysed reaction is N(6)-dimethylallyladenine + A + H2O = 3-methyl-2-butenal + adenine + AH2. Functionally, catalyzes the oxidation of cytokinins, a family of N(6)-substituted adenine derivatives that are plant hormones, where the substituent is an isopentenyl group. Modulates asymmetric cytokinin signaling in emerged lateral roots. Its activity determines cell elongation and number in emerged lateral roots and defines angular growth of lateral roots. In Arabidopsis thaliana (Mouse-ear cress), this protein is Cytokinin dehydrogenase 2 (CKX2).